A 483-amino-acid polypeptide reads, in one-letter code: Nuc-1 negative regulatory protein preg (483 aa).

Low complexity-rich tracts occupy residues 1–32 (MLTR…PRPS), 60–80 (SSRR…PISI), and 176–200 (ASAL…AVAV). 3 disordered regions span residues 1–112 (MLTR…SRPQ), 164–234 (NTVG…SQGD), and 434–483 (CPEP…RHAT). Residues 435–473 (PEPEEADDEDEDEELDESDAIGDDDDDIDGEGGEREEET) are compositionally biased toward acidic residues.

Belongs to the cyclin family.

Negative regulator, together with pgov, of the transcriptional activator nuc-1, which controls the expression of phosphorous acquisition enzymes. The protein is Nuc-1 negative regulatory protein preg (preg) of Neurospora crassa (strain ATCC 24698 / 74-OR23-1A / CBS 708.71 / DSM 1257 / FGSC 987).